The chain runs to 66 residues: Xenoxin-3 (66 aa).

Intrachain disulfides connect Cys3–Cys24, Cys17–Cys37, Cys43–Cys58, and Cys59–Cys64.

As to expression, expressed by the skin dorsal glands.

Its subcellular location is the secreted. In terms of biological role, lacks alpha-neurotoxic activity, has apparently no antibacterial activity, nor anti-coagulant potency. This chain is Xenoxin-3, found in Xenopus laevis (African clawed frog).